Consider the following 368-residue polypeptide: Phosphoserine aminotransferase (368 aa).

R42 is an L-glutamate binding site. Pyridoxal 5'-phosphate contacts are provided by W101, T151, D175, and Q198. K199 carries the post-translational modification N6-(pyridoxal phosphate)lysine. Position 240-241 (240-241 (NT)) interacts with pyridoxal 5'-phosphate.

It belongs to the class-V pyridoxal-phosphate-dependent aminotransferase family. SerC subfamily. As to quaternary structure, homodimer. Pyridoxal 5'-phosphate is required as a cofactor.

It is found in the cytoplasm. It carries out the reaction O-phospho-L-serine + 2-oxoglutarate = 3-phosphooxypyruvate + L-glutamate. It catalyses the reaction 4-(phosphooxy)-L-threonine + 2-oxoglutarate = (R)-3-hydroxy-2-oxo-4-phosphooxybutanoate + L-glutamate. It functions in the pathway amino-acid biosynthesis; L-serine biosynthesis; L-serine from 3-phospho-D-glycerate: step 2/3. It participates in cofactor biosynthesis; pyridoxine 5'-phosphate biosynthesis; pyridoxine 5'-phosphate from D-erythrose 4-phosphate: step 3/5. Functionally, catalyzes the reversible conversion of 3-phosphohydroxypyruvate to phosphoserine and of 3-hydroxy-2-oxo-4-phosphonooxybutanoate to phosphohydroxythreonine. This is Phosphoserine aminotransferase from Polaromonas sp. (strain JS666 / ATCC BAA-500).